A 1360-amino-acid chain; its full sequence is DNA-directed RNA polymerase subunit beta (1360 aa).

This sequence belongs to the RNA polymerase beta chain family. As to quaternary structure, the RNAP catalytic core consists of 2 alpha, 1 beta, 1 beta' and 1 omega subunit. When a sigma factor is associated with the core the holoenzyme is formed, which can initiate transcription.

The catalysed reaction is RNA(n) + a ribonucleoside 5'-triphosphate = RNA(n+1) + diphosphate. In terms of biological role, DNA-dependent RNA polymerase catalyzes the transcription of DNA into RNA using the four ribonucleoside triphosphates as substrates. This chain is DNA-directed RNA polymerase subunit beta, found in Teredinibacter turnerae (strain ATCC 39867 / T7901).